A 997-amino-acid polypeptide reads, in one-letter code: Glutamate [NMDA] receptor subunit 1 (997 aa).

An N-terminal signal peptide occupies residues 1 to 26 (MAVAGFVFCWPLLGLTIVLLVAPIDA). Over 27–573 (AQRHTASDNP…TLVSFLQPFS (547 aa)) the chain is Extracellular. 7 N-linked (GlcNAc...) asparagine glycosylation sites follow: Asn258, Asn314, Asn345, Asn397, Asn454, Asn481, and Asn501. Glycine is bound by residues 530–532 (PLT) and Arg537. Residues 574–594 (NTLWILVMVSVHVVALVLYLL) traverse the membrane as a helical segment. The Cytoplasmic portion of the chain corresponds to 595–651 (DRFSPFGRFKLSHSDSNEEKALNLSSAVWFAWGVLLNSGIGEGTPRSFSARVLGMVW). A helical transmembrane segment spans residues 652–672 (AGFAMIIVASYTANLAAFLVL). The Extracellular portion of the chain corresponds to 673–831 (ERPKTKLSGI…KTPNTLGLKN (159 aa)). Asn693 carries an N-linked (GlcNAc...) asparagine glycan. Residues Ser703 and Asp747 each coordinate glycine. A helical transmembrane segment spans residues 832 to 852 (MAGVFILVGVGIAGGVGLIII). The Cytoplasmic segment spans residues 853–997 (EVIYKKHQVK…YTSDVSHLVV (145 aa)). The disordered stretch occupies residues 970–997 (LGKTRPQQSVLPPRYSPGYTSDVSHLVV). Residues 987 to 997 (GYTSDVSHLVV) are compositionally biased toward polar residues.

It belongs to the glutamate-gated ion channel (TC 1.A.10.1) family. Forms a heteromeric NMDA channel with Nmdar2.

It is found in the cell membrane. It localises to the postsynaptic cell membrane. The protein resides in the postsynaptic density. NMDA receptor subtype of glutamate-gated ion channels with high calcium permeability and voltage-dependent sensitivity to magnesium. Mediated by glycine. This protein plays a key role in synaptic plasticity, synaptogenesis, excitotoxicity, memory acquisition and learning. It mediates neuronal functions in glutamate neurotransmission. Is involved in the cell surface targeting of NMDA receptors. Plays a role in associative learning and in long-term memory consolidation. The chain is Glutamate [NMDA] receptor subunit 1 from Drosophila yakuba (Fruit fly).